Consider the following 319-residue polypeptide: tRNA uridine(34) hydroxylase (319 aa).

In terms of domain architecture, Rhodanese spans 127–221 (KQEDTVIIDA…YGKDPEVQGE (95 aa)). Residue cysteine 181 is the Cysteine persulfide intermediate of the active site.

This sequence belongs to the TrhO family.

The catalysed reaction is uridine(34) in tRNA + AH2 + O2 = 5-hydroxyuridine(34) in tRNA + A + H2O. Its function is as follows. Catalyzes oxygen-dependent 5-hydroxyuridine (ho5U) modification at position 34 in tRNAs. In Bacillus thuringiensis (strain Al Hakam), this protein is tRNA uridine(34) hydroxylase.